Here is a 353-residue protein sequence, read N- to C-terminus: Photosystem II protein D1 (353 aa).

Thr-2 is modified (N-acetylthreonine). At Thr-2 the chain carries Phosphothreonine. The next 3 membrane-spanning stretches (helical) occupy residues 29–46 (YIGW…TATS), 118–133 (HFLL…EWEL), and 142–156 (WIAV…AATA). His-118 contacts chlorophyll a. Tyr-126 serves as a coordination point for pheophytin a. Positions 170 and 189 each coordinate [CaMn4O5] cluster. A helical transmembrane segment spans residues 197 to 218 (FHMLGVAGVFGGSLFSAMHGSL). A chlorophyll a-binding site is contributed by His-198. A quinone contacts are provided by residues His-215 and 264 to 265 (SF). Position 215 (His-215) interacts with Fe cation. His-272 is a binding site for Fe cation. Residues 274–288 (FLAAWPVIGIWFTAL) traverse the membrane as a helical segment. 4 residues coordinate [CaMn4O5] cluster: His-332, Glu-333, Asp-342, and Ala-344. The propeptide occupies 345-353 (SVEAPSVNG).

This sequence belongs to the reaction center PufL/M/PsbA/D family. PSII is composed of 1 copy each of membrane proteins PsbA, PsbB, PsbC, PsbD, PsbE, PsbF, PsbH, PsbI, PsbJ, PsbK, PsbL, PsbM, PsbT, PsbX, PsbY, PsbZ, Psb30/Ycf12, at least 3 peripheral proteins of the oxygen-evolving complex and a large number of cofactors. It forms dimeric complexes. It depends on The D1/D2 heterodimer binds P680, chlorophylls that are the primary electron donor of PSII, and subsequent electron acceptors. It shares a non-heme iron and each subunit binds pheophytin, quinone, additional chlorophylls, carotenoids and lipids. D1 provides most of the ligands for the Mn4-Ca-O5 cluster of the oxygen-evolving complex (OEC). There is also a Cl(-1) ion associated with D1 and D2, which is required for oxygen evolution. The PSII complex binds additional chlorophylls, carotenoids and specific lipids. as a cofactor. In terms of processing, tyr-161 forms a radical intermediate that is referred to as redox-active TyrZ, YZ or Y-Z. Post-translationally, C-terminally processed by CTPA; processing is essential to allow assembly of the oxygen-evolving complex and thus photosynthetic growth.

The protein resides in the plastid. Its subcellular location is the chloroplast thylakoid membrane. The enzyme catalyses 2 a plastoquinone + 4 hnu + 2 H2O = 2 a plastoquinol + O2. Functionally, photosystem II (PSII) is a light-driven water:plastoquinone oxidoreductase that uses light energy to abstract electrons from H(2)O, generating O(2) and a proton gradient subsequently used for ATP formation. It consists of a core antenna complex that captures photons, and an electron transfer chain that converts photonic excitation into a charge separation. The D1/D2 (PsbA/PsbD) reaction center heterodimer binds P680, the primary electron donor of PSII as well as several subsequent electron acceptors. The protein is Photosystem II protein D1 of Chlorokybus atmophyticus (Soil alga).